A 68-amino-acid chain; its full sequence is Sec-independent protein translocase protein TatA (68 aa).

Residues 1–21 form a helical membrane-spanning segment; sequence MGSFSIWHWLIVLAVVLLLFG. The disordered stretch occupies residues 48–68; sequence AAAADKSIDGKTVDHKSDEVR. Over residues 53-68 the composition is skewed to basic and acidic residues; the sequence is KSIDGKTVDHKSDEVR.

Belongs to the TatA/E family. The Tat system comprises two distinct complexes: a TatABC complex, containing multiple copies of TatA, TatB and TatC subunits, and a separate TatA complex, containing only TatA subunits. Substrates initially bind to the TatABC complex, which probably triggers association of the separate TatA complex to form the active translocon.

The protein localises to the cell inner membrane. Its function is as follows. Part of the twin-arginine translocation (Tat) system that transports large folded proteins containing a characteristic twin-arginine motif in their signal peptide across membranes. TatA could form the protein-conducting channel of the Tat system. This is Sec-independent protein translocase protein TatA from Sinorhizobium medicae (strain WSM419) (Ensifer medicae).